The primary structure comprises 121 residues: Neuromedin-B (121 aa).

Positions 1 to 24 (MTLRAVGVRLLGGLLLFALLAAGA) are cleaved as a signal peptide. A Methionine amide modification is found at Met-56. A propeptide spanning residues 60 to 121 (SLEPPSPSLL…RRLLVQTLQK (62 aa)) is cleaved from the precursor. The interval 61–80 (LEPPSPSLLGTAPHTSLRDQ) is disordered.

This sequence belongs to the bombesin/neuromedin-B/ranatensin family.

It localises to the secreted. The protein resides in the cell projection. The protein localises to the neuron projection. Functionally, stimulates smooth muscle contraction. Induces sighing by acting directly on the pre-Botzinger complex, a cluster of several thousand neurons in the ventrolateral medulla responsible for inspiration during respiratory activity. Contributes to the induction of sneezing following exposure to chemical irritants or allergens which causes release of NMB by nasal sensory neurons and activation of NMBR-expressing neurons in the sneeze-evoking region of the brainstem. These in turn activate neurons of the caudal ventral respiratory group, giving rise to the sneezing response. Contributes to induction of acute itch, possibly through activation of the NMBR receptor on dorsal root ganglion neurons. Increases expression of NMBR and steroidogenic mediators STAR, CYP11A1 and HSD3B1 in Leydig cells, induces secretion of testosterone by Leydig cells and also promotes Leydig cell proliferation. Plays a role in the innate immune response to influenza A virus infection by enhancing interferon alpha expression and reducing expression of IL6. Plays a role in CSF1-induced proliferation of osteoclast precursors by contributing to the positive regulation of the expression of the CSF1 receptor CSF1R. The chain is Neuromedin-B (NMB) from Bos taurus (Bovine).